The sequence spans 226 residues: LexA repressor (226 aa).

Residues 28-48 constitute a DNA-binding region (H-T-H motif); that stretch reads RAEICQSLGFRSPNAAESHLR. Catalysis depends on for autocatalytic cleavage activity residues S133 and K170.

Belongs to the peptidase S24 family. As to quaternary structure, homodimer.

It catalyses the reaction Hydrolysis of Ala-|-Gly bond in repressor LexA.. Represses a number of genes involved in the response to DNA damage (SOS response), including recA and lexA. In the presence of single-stranded DNA, RecA interacts with LexA causing an autocatalytic cleavage which disrupts the DNA-binding part of LexA, leading to derepression of the SOS regulon and eventually DNA repair. The protein is LexA repressor of Halorhodospira halophila (strain DSM 244 / SL1) (Ectothiorhodospira halophila (strain DSM 244 / SL1)).